A 97-amino-acid polypeptide reads, in one-letter code: Co-chaperonin GroES (97 aa).

The protein belongs to the GroES chaperonin family. Heptamer of 7 subunits arranged in a ring. Interacts with the chaperonin GroEL.

It localises to the cytoplasm. Together with the chaperonin GroEL, plays an essential role in assisting protein folding. The GroEL-GroES system forms a nano-cage that allows encapsulation of the non-native substrate proteins and provides a physical environment optimized to promote and accelerate protein folding. GroES binds to the apical surface of the GroEL ring, thereby capping the opening of the GroEL channel. In Arthrobacter sp. (strain FB24), this protein is Co-chaperonin GroES.